A 329-amino-acid polypeptide reads, in one-letter code: Protein-arginine N-acetylglucosaminyltransferase NleB1 (329 aa).

N-beta-linked (GlcNAc) arginine; by autocatalysis glycosylation is present at Arg-13. 48–50 (QWF) lines the UDP-N-acetyl-alpha-D-glucosamine pocket. N-beta-linked (GlcNAc) arginine; by autocatalysis glycosylation occurs at Arg-53. UDP-N-acetyl-alpha-D-glucosamine is bound at residue Tyr-72. A glycan (N-beta-linked (GlcNAc) arginine; by autocatalysis) is linked at Arg-159. Position 219–222 (219–222 (YLDA)) interacts with UDP-N-acetyl-alpha-D-glucosamine. The DXD motif signature appears at 221-223 (DAD). A Mn(2+)-binding site is contributed by Asp-223. The active-site Proton acceptor is the Glu-253. Arg-293 carries N-beta-linked (GlcNAc) arginine; by autocatalysis glycosylation. Mn(2+) contacts are provided by Asn-320 and Ser-322. Residues Ser-322 and 327-329 (SSW) each bind UDP-N-acetyl-alpha-D-glucosamine.

The protein belongs to the glycosyltransferase NleB family. Mn(2+) serves as cofactor. Auto-glycosylated: arginine GlcNAcylation is required for activity toward death domain-containing host target proteins.

It localises to the secreted. The protein localises to the host cytoplasm. The enzyme catalyses L-arginyl-[protein] + UDP-N-acetyl-alpha-D-glucosamine = N(omega)-(N-acetyl-beta-D-glucosaminyl)-L-arginyl-[protein] + UDP + H(+). Its activity is regulated as follows. Protein-arginine N-acetylglucosaminyltransferase activity is inhibited by 100066N compound (flavone analog) and 102644N compound (a substituted isoxazole). Its function is as follows. Protein-arginine N-acetylglucosaminyltransferase effector that disrupts TNF signaling in infected cells, including NF-kappa-B signaling, apoptosis and necroptosis. Acts by catalyzing the transfer of a single N-acetylglucosamine (GlcNAc) to a conserved arginine residue in the death domain of host proteins such as FADD: arginine GlcNAcylation prevents homotypic/heterotypic death domain interactions and assembly of the oligomeric TNF-alpha receptor complex, thereby disrupting TNF signaling. Also acts on host proteins without a death domain: catalyzes arginine GlcNAcylation of host GAPDH protein, thereby preventing GAPDH interaction with TRAF2, leading to inhibit NF-kappa-B signaling. Catalyzes auto-GlcNAcylation, which is required for activity toward death domain-containing host target proteins. This Escherichia coli O157:H7 protein is Protein-arginine N-acetylglucosaminyltransferase NleB1.